A 379-amino-acid chain; its full sequence is Glutamate 5-kinase (379 aa).

Residue lysine 20 coordinates ATP. Positions 59, 146, and 158 each coordinate substrate. 220–226 (SGGMYSK) serves as a coordination point for ATP. In terms of domain architecture, PUA spans 285-362 (TGSVVVDDGA…AELTAILGDN (78 aa)).

Belongs to the glutamate 5-kinase family.

The protein localises to the cytoplasm. It carries out the reaction L-glutamate + ATP = L-glutamyl 5-phosphate + ADP. It participates in amino-acid biosynthesis; L-proline biosynthesis; L-glutamate 5-semialdehyde from L-glutamate: step 1/2. In terms of biological role, catalyzes the transfer of a phosphate group to glutamate to form L-glutamate 5-phosphate. This Oleidesulfovibrio alaskensis (strain ATCC BAA-1058 / DSM 17464 / G20) (Desulfovibrio alaskensis) protein is Glutamate 5-kinase.